A 473-amino-acid polypeptide reads, in one-letter code: Photosystem II CP43 reaction center protein (473 aa).

A propeptide spanning residues M1 to E14 is cleaved from the precursor. N-acetylthreonine is present on T15. A Phosphothreonine modification is found at T15. The next 5 membrane-spanning stretches (helical) occupy residues L69–A93, L134–N155, K178–T200, K255–S275, and W291–A312. E367 is a [CaMn4O5] cluster binding site. A helical transmembrane segment spans residues R447–P471.

It belongs to the PsbB/PsbC family. PsbC subfamily. As to quaternary structure, PSII is composed of 1 copy each of membrane proteins PsbA, PsbB, PsbC, PsbD, PsbE, PsbF, PsbH, PsbI, PsbJ, PsbK, PsbL, PsbM, PsbT, PsbX, PsbY, PsbZ, Psb30/Ycf12, at least 3 peripheral proteins of the oxygen-evolving complex and a large number of cofactors. It forms dimeric complexes. Binds multiple chlorophylls and provides some of the ligands for the Ca-4Mn-5O cluster of the oxygen-evolving complex. It may also provide a ligand for a Cl- that is required for oxygen evolution. PSII binds additional chlorophylls, carotenoids and specific lipids. is required as a cofactor.

It is found in the plastid. The protein localises to the chloroplast thylakoid membrane. One of the components of the core complex of photosystem II (PSII). It binds chlorophyll and helps catalyze the primary light-induced photochemical processes of PSII. PSII is a light-driven water:plastoquinone oxidoreductase, using light energy to abstract electrons from H(2)O, generating O(2) and a proton gradient subsequently used for ATP formation. The polypeptide is Photosystem II CP43 reaction center protein (Physcomitrium patens (Spreading-leaved earth moss)).